The chain runs to 539 residues: Chaperonin GroEL (539 aa).

Residues 29-32, 86-90, Gly413, 476-478, and Asp492 contribute to the ATP site; these read TIGP, DGTTT, and NAA.

Belongs to the chaperonin (HSP60) family. Forms a cylinder of 14 subunits composed of two heptameric rings stacked back-to-back. Interacts with the co-chaperonin GroES.

The protein resides in the cytoplasm. It catalyses the reaction ATP + H2O + a folded polypeptide = ADP + phosphate + an unfolded polypeptide.. Its function is as follows. Together with its co-chaperonin GroES, plays an essential role in assisting protein folding. The GroEL-GroES system forms a nano-cage that allows encapsulation of the non-native substrate proteins and provides a physical environment optimized to promote and accelerate protein folding. This Leuconostoc mesenteroides subsp. mesenteroides (strain ATCC 8293 / DSM 20343 / BCRC 11652 / CCM 1803 / JCM 6124 / NCDO 523 / NBRC 100496 / NCIMB 8023 / NCTC 12954 / NRRL B-1118 / 37Y) protein is Chaperonin GroEL.